Consider the following 200-residue polypeptide: Ribonuclease HII (200 aa).

Residues 10-200 (LIEAGCDEAG…LGDGQLNLNF (191 aa)) enclose the RNase H type-2 domain. Residues D16, E17, and D108 each coordinate a divalent metal cation.

Belongs to the RNase HII family. Requires Mn(2+) as cofactor. Mg(2+) serves as cofactor.

The protein localises to the cytoplasm. The catalysed reaction is Endonucleolytic cleavage to 5'-phosphomonoester.. In terms of biological role, endonuclease that specifically degrades the RNA of RNA-DNA hybrids. The protein is Ribonuclease HII of Bacteroides thetaiotaomicron (strain ATCC 29148 / DSM 2079 / JCM 5827 / CCUG 10774 / NCTC 10582 / VPI-5482 / E50).